A 189-amino-acid chain; its full sequence is NADH-quinone oxidoreductase subunit B (189 aa).

4 residues coordinate [4Fe-4S] cluster: cysteine 39, cysteine 40, cysteine 104, and cysteine 135.

It belongs to the complex I 20 kDa subunit family. In terms of assembly, NDH-1 is composed of 14 different subunits. Subunits NuoB, C, D, E, F, and G constitute the peripheral sector of the complex. [4Fe-4S] cluster serves as cofactor.

It is found in the cell inner membrane. The catalysed reaction is a quinone + NADH + 5 H(+)(in) = a quinol + NAD(+) + 4 H(+)(out). Functionally, NDH-1 shuttles electrons from NADH, via FMN and iron-sulfur (Fe-S) centers, to quinones in the respiratory chain. The immediate electron acceptor for the enzyme in this species is believed to be a menaquinone. Couples the redox reaction to proton translocation (for every two electrons transferred, four hydrogen ions are translocated across the cytoplasmic membrane), and thus conserves the redox energy in a proton gradient. The chain is NADH-quinone oxidoreductase subunit B from Pelodictyon phaeoclathratiforme (strain DSM 5477 / BU-1).